The chain runs to 206 residues: Small ribosomal subunit protein uS4 (206 aa).

An S4 RNA-binding domain is found at Cys-96 to Val-156.

The protein belongs to the universal ribosomal protein uS4 family. In terms of assembly, part of the 30S ribosomal subunit. Contacts protein S5. The interaction surface between S4 and S5 is involved in control of translational fidelity.

Functionally, one of the primary rRNA binding proteins, it binds directly to 16S rRNA where it nucleates assembly of the body of the 30S subunit. In terms of biological role, with S5 and S12 plays an important role in translational accuracy. The protein is Small ribosomal subunit protein uS4 of Pseudomonas fluorescens (strain SBW25).